Here is a 61-residue protein sequence, read N- to C-terminus: MARKALIVKQQKPQKYKTREYNRCKICGRPRAYLRKFGMCRLCFRKYAHQGMIPGVKKASW.

Residues cysteine 24, cysteine 27, cysteine 40, and cysteine 43 each contribute to the Zn(2+) site.

It belongs to the universal ribosomal protein uS14 family. Zinc-binding uS14 subfamily. In terms of assembly, part of the 30S ribosomal subunit. Contacts proteins S3 and S10. Zn(2+) is required as a cofactor.

Its function is as follows. Binds 16S rRNA, required for the assembly of 30S particles and may also be responsible for determining the conformation of the 16S rRNA at the A site. The polypeptide is Small ribosomal subunit protein uS14 (Caldanaerobacter subterraneus subsp. tengcongensis (strain DSM 15242 / JCM 11007 / NBRC 100824 / MB4) (Thermoanaerobacter tengcongensis)).